Here is a 328-residue protein sequence, read N- to C-terminus: Beta-ketoacyl-[acyl-carrier-protein] synthase III (328 aa).

Active-site residues include C122 and H255. The interval 256–260 (QANIR) is ACP-binding. Residue N285 is part of the active site.

Belongs to the thiolase-like superfamily. FabH family. In terms of assembly, homodimer.

Its subcellular location is the cytoplasm. It carries out the reaction malonyl-[ACP] + acetyl-CoA + H(+) = 3-oxobutanoyl-[ACP] + CO2 + CoA. It participates in lipid metabolism; fatty acid biosynthesis. Catalyzes the condensation reaction of fatty acid synthesis by the addition to an acyl acceptor of two carbons from malonyl-ACP. Catalyzes the first condensation reaction which initiates fatty acid synthesis and may therefore play a role in governing the total rate of fatty acid production. Possesses both acetoacetyl-ACP synthase and acetyl transacylase activities. Its substrate specificity determines the biosynthesis of branched-chain and/or straight-chain of fatty acids. The polypeptide is Beta-ketoacyl-[acyl-carrier-protein] synthase III (Polynucleobacter necessarius subsp. necessarius (strain STIR1)).